We begin with the raw amino-acid sequence, 452 residues long: Ribosome biogenesis protein YTM1 (452 aa).

Residues 17–98 (IVSQPVVFTT…EETLEIEYIE (82 aa)) form a ubiquitin-like (UBL) domain region. WD repeat units lie at residues 110 to 148 (PHED…TASI), 150 to 195 (AHPA…NPMA), and 208 to 247 (LHTA…TDEV). A disordered region spans residues 245 to 269 (DEVPEPALNERDRSKKRRRVEEGEV). Residues 252 to 269 (LNERDRSKKRRRVEEGEV) show a composition bias toward basic and acidic residues. WD repeat units follow at residues 282 to 322 (SHTA…CSHT), 325 to 364 (ASEK…TILT), 371 to 411 (MHPS…SAMA), and 418 to 452 (GSGQ…EQKV).

The protein belongs to the WD repeat WDR12/YTM1 family. In terms of assembly, component of the NOP7 complex, composed of ERB1, NOP7 and YTM1. The complex is held together by ERB1, which interacts with NOP7 via its N-terminal domain and with YTM1 via a high-affinity interaction between the seven-bladed beta-propeller domains of the 2 proteins. The NOP7 complex associates with the 66S pre-ribosome. Interacts (via UBL domain) with MDN1 (via VWFA/MIDAS domain).

The protein resides in the nucleus. Its subcellular location is the nucleolus. It localises to the nucleoplasm. In terms of biological role, component of the NOP7 complex, which is required for maturation of the 25S and 5.8S ribosomal RNAs and formation of the 60S ribosome. The protein is Ribosome biogenesis protein YTM1 of Laccaria bicolor (strain S238N-H82 / ATCC MYA-4686) (Bicoloured deceiver).